Reading from the N-terminus, the 291-residue chain is Bis(5'-nucleosyl)-tetraphosphatase, symmetrical (291 aa).

This sequence belongs to the Ap4A hydrolase family.

The enzyme catalyses P(1),P(4)-bis(5'-adenosyl) tetraphosphate + H2O = 2 ADP + 2 H(+). Functionally, hydrolyzes diadenosine 5',5'''-P1,P4-tetraphosphate to yield ADP. The chain is Bis(5'-nucleosyl)-tetraphosphatase, symmetrical from Coxiella burnetii (strain RSA 331 / Henzerling II).